The following is an 872-amino-acid chain: Cilia- and flagella-associated protein 58 (872 aa).

2 coiled-coil regions span residues Val106 to Glu595 and Glu642 to Lys839.

It belongs to the CFAP58 family. As to quaternary structure, interacts with ODFP2.

Its subcellular location is the cell projection. The protein localises to the cilium. It localises to the flagellum. The protein resides in the cytoplasm. It is found in the cytoskeleton. Its subcellular location is the microtubule organizing center. The protein localises to the centrosome. Functionally, has an essential role in the assembly and organization of the sperm flagellar axoneme. Required for the elongation of the primary cilium and sperm flagellar midpiece via modulation of the Notch signaling pathway. The sequence is that of Cilia- and flagella-associated protein 58 from Homo sapiens (Human).